Here is a 601-residue protein sequence, read N- to C-terminus: Protein FREE1 (601 aa).

The interval 1-240 (MQQGDYNSYY…SGEYPAFEDS (240 aa)) is disordered. Pro residues predominate over residues 21–35 (TPNPNPNPNPSPPAP). 2 stretches are compositionally biased toward polar residues: residues 63–79 (DYSN…QNSE) and 125–155 (LSSY…QHQT). The span at 161–175 (APPPSSAPAPNPNPA) shows a compositional bias: pro residues. Residues 176–197 (PYSSSLYSAPPYSSGGSSIPPS) are compositionally biased toward low complexity. Positions 214-231 (NRSRSDLGSDLYGKRSDS) are enriched in basic and acidic residues. Position 218 is a phosphoserine (Ser218). The tract at residues 338–344 (LDGLRML) is nuclear export signal. Residues 455-515 (DEAVSKCTSC…VCDRCMAEVS (61 aa)) form an FYVE-type zinc finger. Cys461, Cys464, Cys477, Cys480, Cys485, Cys488, Cys507, and Cys510 together coordinate Zn(2+). Residues 527-552 (RNVSLQSHEDLARKLQEEMERNRKSS) adopt a coiled-coil conformation. Ser530 and Ser533 each carry phosphoserine. Positions 542 to 561 (QEEMERNRKSSSGLREGSGR) are disordered.

In terms of assembly, part of the ESCRT-I complex. Interacts with VPS23A and VPS23B, but not with VPS28 or VPS37. Interacts with IRT1. Interacts with SH3P2. Interacts with SH3P3, but not with SH3P1. Interacts (via N-terminus) with PYL4 and PYR3. Interacts (via C-terminus) with SNRK2D/SNRK2.2, SNRK2I/SNRK2.3, ABF4 and ABI5. Interacts with SINAT1, SINAT2, SINAT3 and SINAT4. Interacts with SINAT5. Component of a phosphoinositide 3-kinase (PI3K) complex containing ATG6, SH3P2 and FREE1. Phosphorylated at Ser-530 and Ser-533 by SNRK2D/SNRK2.2 and SNRK2I/SNRK2.3 in response to abscisic acid (ABA). Phosphorylation is necessary for ABA-induced FREE1 nuclear import. In terms of processing, ubiquitinated by SINAT1, SINAT2, SINAT3 and SINAT4 for subsequent proteasomal degradation. Ubiquitous. Lowest expression in mature seeds.

The protein resides in the cytoplasm. It localises to the prevacuolar compartment membrane. It is found in the late endosome. Its subcellular location is the endosome. The protein localises to the multivesicular body. The protein resides in the nucleus. Its function is as follows. Endosomal sorting complex required for transport (ESCRT) component regulating multivesicular body (MVB) protein sorting and plant growth. Required for the formation of intra-luminal vesicles (ILVs)in MVBs. Binds to phosphatidylinositol-3-phosphate (PI3P) and ubiquitin. Controls IRT1 recycling to the plasma membrane and impacts the polar delivery of this transporter to the outer plasma membrane domain. Regulates ubiquitin-dependent membrane protein degradation, vacuolar transport, autophagy, and vacuole biogenesis. ESCRT component that binds ubiquitin and regulates vacuolar sorting of proteins. Attenuates abscisic acid (ABA) signaling through RSL1-triggered degradation of the ABA receptors PYR1 and PYL4. Interacts with PYL4 and PYR1, and delivers the ubiquitinated ABA receptors as cargo to the vacuolar degradation pathway. In response to ABA, is phosphorylated by SnRK2 kinases which mediate FREE1 nuclear import. In the nucleus, interacts with the ABA-responsive transcription factors ABF4 and ABI5 to reduce their ability to bind to their cis-regulatory sequences of downstream genes, thus leading to transcriptional inhibition of ABA signaling pathway. Negatively regulates salt stress tolerance via a negative feedback loop involving ABA signaling pathway. This Arabidopsis thaliana (Mouse-ear cress) protein is Protein FREE1.